The following is a 200-amino-acid chain: Small ribosomal subunit protein eS1 (200 aa).

The protein belongs to the eukaryotic ribosomal protein eS1 family.

The protein is Small ribosomal subunit protein eS1 of Thermococcus onnurineus (strain NA1).